Reading from the N-terminus, the 3122-residue chain is Laminin subunit alpha-2 (3122 aa).

The first 22 residues, 1–22 (MPGAAGVLLLLLLSGGLGGVQA), serve as a signal peptide directing secretion. The Laminin N-terminal domain occupies 35–286 (QQRGLFPAVL…SVKDISVGGM (252 aa)). 2 N-linked (GlcNAc...) asparagine glycosylation sites follow: N55 and N89. Intrachain disulfides connect C287/C296, C289/C307, C309/C318, C321/C341, C344/C353, and C346/C378. 4 Laminin EGF-like domains span residues 287 to 343 (CICY…ECEA), 344 to 413 (CNCH…PCQP), 414 to 468 (CHCD…DCKA), and 469 to 517 (CNCS…GCDE). N-linked (GlcNAc...) asparagine glycosylation occurs at N303. 2 N-linked (GlcNAc...) asparagine glycosylation sites follow: N363 and N380. 10 disulfides stabilise this stretch: C381–C390, C393–C411, C414–C426, C416–C442, C444–C453, C456–C466, C469–C482, C471–C486, C488–C497, and C500–C515. N-linked (GlcNAc...) asparagine glycosylation is present at N470. One can recognise a Laminin EGF-like 5; first part domain in the interval 518-527 (CFCSGVSNRC). The Laminin IV type A 1 domain occupies 531–723 (YWTYGKIQDM…DGSIAAAVEV (193 aa)). The 33-residue stretch at 724 to 756 (CQCPPGYTGSSCESCWPRHRRVNGTIFGGICEP) folds into the Laminin EGF-like 5; second part domain. An N-linked (GlcNAc...) asparagine glycan is attached at N746. Cystine bridges form between C757–C766, C759–C773, C776–C785, C788–C804, C807–C822, C809–C832, C835–C844, C847–C862, C865–C879, C867–C886, C889–C898, C901–C915, C918–C930, C920–C937, C939–C948, C951–C964, C967–C979, C969–C985, C987–C996, C999–C1011, C1014–C1023, C1016–C1030, C1032–C1041, C1044–C1057, C1060–C1072, C1062–C1079, C1081–C1090, C1093–C1103, C1106–C1118, C1108–C1134, C1136–C1145, and C1148–C1163. Laminin EGF-like domains lie at 757-806 (CQCF…DCQP), 807-864 (CACP…SCQP), 865-917 (CQCN…NCQP), 918-966 (CRCN…GCVP), 967-1013 (CNCN…GCTA), 1014-1059 (CECS…GCKA), 1060-1105 (CNCS…RCNL), and 1106-1165 (CDCF…GCSS). N1061 carries an N-linked (GlcNAc...) asparagine glycan. The Laminin EGF-like 14; first part domain maps to 1166–1175 (CYCFGTTTQC). The Laminin IV type A 2 domain occupies 1176 to 1379 (SEAKGLIRTW…MTPPADLIEK (204 aa)). The 40-residue stretch at 1380–1419 (CDCPLGYSGLSCEACLPGFYRLRSQPGGRTPGPTLGTCVP) folds into the Laminin EGF-like 14; second part domain. Cystine bridges form between C1420–C1429, C1422–C1436, C1439–C1448, C1451–C1466, C1469–C1484, C1471–C1494, C1497–C1506, C1509–C1524, C1527–C1539, C1529–C1546, C1548–C1557, and C1560–C1571. Laminin EGF-like domains follow at residues 1420–1468 (CQCN…DCQQ), 1469–1526 (CACP…SCQE), and 1527–1573 (CECD…ECVF). The tract at residues 1574 to 2144 (CGDECTGLLL…NQARKQANSI (571 aa)) is domain II and I. N-linked (GlcNAc...) asparagine glycans are attached at residues N1597, N1614, N1700, N1810, N1901, N1916, N1920, N2017, N2028, N2045, N2126, and N2240. Positions 1630 to 2150 (ERLIQLAEGN…ANSIKVSVSS (521 aa)) form a coiled coil. 5 Laminin G-like domains span residues 2145–2328 (KVSV…CKGC), 2340–2521 (TIQF…TKGC), 2526–2710 (VYTV…IGRC), 2763–2934 (SKQF…VGTC), and 2939–3110 (QRGT…KALE). C2302 and C2328 are disulfide-bonded. Residues N2360, N2435, and N2478 are each glycosylated (N-linked (GlcNAc...) asparagine). Cysteines 2495 and 2521 form a disulfide. 3 N-linked (GlcNAc...) asparagine glycosylation sites follow: N2551, N2558, and N2648. C2683 and C2710 are joined by a disulfide. N-linked (GlcNAc...) asparagine glycans are attached at residues N2868 and N2893. C2909 and C2934 are disulfide-bonded. A compositionally biased stretch (polar residues) spans 3043 to 3060 (GNQVEAQSPNPASTSADT). Residues 3043 to 3063 (GNQVEAQSPNPASTSADTNDP) form a disordered region.

In terms of assembly, laminin is a complex glycoprotein, consisting of three different polypeptide chains (alpha, beta, gamma), which are bound to each other by disulfide bonds into a cross-shaped molecule comprising one long and three short arms with globules at each end. Alpha-2 is a subunit of laminin-2 (laminin-211 or merosin), laminin-4 (laminin-221 or S-merosin) and laminin-12 (laminin-213). Interacts with FBLN1, FBLN2 and NID2. As to expression, placenta, striated muscle, peripheral nerve, cardiac muscle, pancreas, lung, spleen, kidney, adrenal gland, skin, testis, meninges, choroid plexus, and some other regions of the brain; not in liver, thymus and bone.

The protein resides in the secreted. The protein localises to the extracellular space. It localises to the extracellular matrix. It is found in the basement membrane. Its function is as follows. Binding to cells via a high affinity receptor, laminin is thought to mediate the attachment, migration and organization of cells into tissues during embryonic development by interacting with other extracellular matrix components. The chain is Laminin subunit alpha-2 (LAMA2) from Homo sapiens (Human).